Here is a 569-residue protein sequence, read N- to C-terminus: MKKISRKEYVSMYGPTTGDKVRLGDTDLIAEVEHDYTIYGEELKFGGGKTLREGMSQSNNPSKEELDLIITNALIVDYTGIYKADIGIKDGKIAGIGKGGNKDMQDGVKNNLSVGPATEALAGEGLIVTAGGIDTHIHFISPQQIPTAFASGVTTMIGGGTGPADGTNATTITPGRRNLKWMLRAAEEYSMNLGFLAKGNASNDASLADQIEAGAIGFKIHEDWGTTPSAINHALDVADKYDVQVAIHTDTLNEAGCVEDTMAAIAGRTMHTFHTEGAGGGHAPDIIKVAGEHNILPASTNPTIPFTVNTEAEHMDMLMVCHHLDKSIKEDVQFADSRIRPQTIAAEDTLHDMGIFSITSSDSQAMGRVGEVITRTWQTADKNKKEFGRLKEEKGDNDNFRIKRYLSKYTINPAIAHGISEYVGSVEVGKVADLVLWSPAFFGVKPNMIIKGGFIALSQMGDANASIPTPQPVYYREMFAHHGKAKYDANITFVSQAAYDKGIKEELGLERQVLPVKNCRNITKKDMQFNDTTAHIEVNPETYHVFVDGKEVTSKPANKVSLAQLFSIF.

The Urease domain maps to 131–569; the sequence is GGIDTHIHFI…VSLAQLFSIF (439 aa). Ni(2+) is bound by residues H136, H138, and K219. An N6-carboxylysine modification is found at K219. H221 is a substrate binding site. Ni(2+) is bound by residues H248 and H274. The active-site Proton donor is the H322. D362 serves as a coordination point for Ni(2+).

Belongs to the metallo-dependent hydrolases superfamily. Urease alpha subunit family. Heterohexamer of 3 UreA (alpha) and 3 UreB (beta) subunits. Four heterohexamers assemble to form a 16 nm dodecameric complex. Ni cation serves as cofactor. In terms of processing, carboxylation allows a single lysine to coordinate two nickel ions.

The protein resides in the cytoplasm. It carries out the reaction urea + 2 H2O + H(+) = hydrogencarbonate + 2 NH4(+). It functions in the pathway nitrogen metabolism; urea degradation; CO(2) and NH(3) from urea (urease route): step 1/1. Its function is as follows. Ammonia produced by ureolysis increases the gastric pH thereby providing an environment permissive for colonization of the stomach. This chain is Urease subunit beta, found in Helicobacter pylori (strain J99 / ATCC 700824) (Campylobacter pylori J99).